Here is a 243-residue protein sequence, read N- to C-terminus: NAD-dependent protein deacylase SIR2rp3 (243 aa).

The Deacetylase sirtuin-type domain occupies 1-239; it reads MKACRCITIL…PTWVDQVLKE (239 aa). 12 to 31 provides a ligand contact to NAD(+); the sequence is GAGISAESGISTFRDSNGLW. Substrate contacts are provided by Tyr-56 and Arg-59. 95-98 is a binding site for NAD(+); it reads QNVD. His-113 functions as the Proton acceptor in the catalytic mechanism. Cys-121 and Cys-141 together coordinate Zn(2+). Residues 181 to 183 and Ala-225 contribute to the NAD(+) site; that span reads GTS.

Belongs to the sirtuin family. Class III subfamily. Zn(2+) serves as cofactor.

The protein resides in the mitochondrion. It carries out the reaction N(6)-malonyl-L-lysyl-[protein] + NAD(+) + H2O = 2''-O-malonyl-ADP-D-ribose + nicotinamide + L-lysyl-[protein]. It catalyses the reaction N(6)-succinyl-L-lysyl-[protein] + NAD(+) + H2O = 2''-O-succinyl-ADP-D-ribose + nicotinamide + L-lysyl-[protein]. The enzyme catalyses N(6)-glutaryl-L-lysyl-[protein] + NAD(+) + H2O = 2''-O-glutaryl-ADP-D-ribose + nicotinamide + L-lysyl-[protein]. Functionally, NAD-dependent lysine demalonylase, desuccinylase and deglutarylase that specifically removes malonyl, succinyl and glutaryl groups on target proteins. Has weak NAD-dependent protein deacetylase activity; however this activity may not be physiologically relevant in vivo. The sequence is that of NAD-dependent protein deacylase SIR2rp3 (SIR2rp3) from Leishmania major.